The primary structure comprises 314 residues: Malate dehydrogenase (314 aa).

9–15 serves as a coordination point for NAD(+); sequence IGVGNVG. Residues Arg-84 and Arg-90 each contribute to the substrate site. NAD(+) contacts are provided by residues Asn-97 and 120-122; that span reads ISN. The substrate site is built by Asn-122 and Arg-153. The active-site Proton acceptor is the His-177.

It belongs to the LDH/MDH superfamily.

The catalysed reaction is (S)-malate + NAD(+) = oxaloacetate + NADH + H(+). In terms of biological role, catalyzes the reversible oxidation of malate to oxaloacetate. This Aliarcobacter butzleri (strain RM4018) (Arcobacter butzleri) protein is Malate dehydrogenase.